We begin with the raw amino-acid sequence, 80 residues long: FXYD domain-containing ion transport regulator 7 (80 aa).

Topologically, residues 1–23 are extracellular; the sequence is MATPTQTPTKAPEEPDPFYYDYN. O-linked (GlcNAc) threonine glycosylation is found at threonine 3, threonine 5, and threonine 9. The helical transmembrane segment at 24–46 threads the bilayer; sequence TVQTVGMTLATILFLLGILIVIS. The Cytoplasmic portion of the chain corresponds to 47 to 80; sequence KKVKCRKADSRSESPTCKSCKSELPSSAPGGGGV. Residues 54-80 are disordered; the sequence is ADSRSESPTCKSCKSELPSSAPGGGGV. At serine 73 the chain carries Phosphoserine.

Belongs to the FXYD family. As to quaternary structure, regulatory subunit of the sodium/potassium-transporting ATPase which is composed of a catalytic alpha subunit, a non-catalytic beta subunit and a FXYD regulatory unit that modulates the enzymatic activity in a tissue- and isoform-specific way by changing affinities of the Na+/K+-ATPase toward Na(+), K(+) or ATP. O-glycosylated; required for stabilization and translocation to the plasma membrane.

The protein localises to the cell membrane. Functionally, associates with and regulates the activity of the sodium/potassium-transporting ATPase (NKA) which catalyzes the hydrolysis of ATP coupled with the exchange of Na(+) and K(+) ions across the plasma membrane. Reduces the apparent affinity for external K(+), an effect that depends on the presence of external Na(+) and voltage. Increases the apparent affinity for intracellular Na(+). This is FXYD domain-containing ion transport regulator 7 (FXYD7) from Homo sapiens (Human).